A 208-amino-acid polypeptide reads, in one-letter code: Octanoyltransferase (208 aa).

A BPL/LPL catalytic domain is found at 30–208 (GTASEAVFIL…ILKQEFYKIF (179 aa)). Substrate is bound by residues 69–76 (RGGKFTYH), 142–144 (SIG), and 155–157 (GVA). Cys173 functions as the Acyl-thioester intermediate in the catalytic mechanism.

The protein belongs to the LipB family.

It is found in the cytoplasm. The enzyme catalyses octanoyl-[ACP] + L-lysyl-[protein] = N(6)-octanoyl-L-lysyl-[protein] + holo-[ACP] + H(+). The protein operates within protein modification; protein lipoylation via endogenous pathway; protein N(6)-(lipoyl)lysine from octanoyl-[acyl-carrier-protein]: step 1/2. In terms of biological role, catalyzes the transfer of endogenously produced octanoic acid from octanoyl-acyl-carrier-protein onto the lipoyl domains of lipoate-dependent enzymes. Lipoyl-ACP can also act as a substrate although octanoyl-ACP is likely to be the physiological substrate. The chain is Octanoyltransferase from Orientia tsutsugamushi (strain Ikeda) (Rickettsia tsutsugamushi).